The following is a 312-amino-acid chain: Ribosomal RNA small subunit methyltransferase H (312 aa).

S-adenosyl-L-methionine is bound by residues 32 to 34, D51, F78, D99, and Q106; that span reads AGH.

This sequence belongs to the methyltransferase superfamily. RsmH family.

The protein localises to the cytoplasm. It catalyses the reaction cytidine(1402) in 16S rRNA + S-adenosyl-L-methionine = N(4)-methylcytidine(1402) in 16S rRNA + S-adenosyl-L-homocysteine + H(+). Its function is as follows. Specifically methylates the N4 position of cytidine in position 1402 (C1402) of 16S rRNA. This is Ribosomal RNA small subunit methyltransferase H from Exiguobacterium sibiricum (strain DSM 17290 / CCUG 55495 / CIP 109462 / JCM 13490 / 255-15).